Here is a 365-residue protein sequence, read N- to C-terminus: MEPGQPREAREPGPGAETAAVPRWEEAKTFYDNLSSKKKPKSPKPQNAVTIAVSSRALFRMDEEQRIYTEQGVEEYVRYQLEHENEPFSPGPAFPFVKALEAVNKRLRELYPDSEDIFDIVLMTNNHAQVGVRLINSINHYDLFIERFCMTGGNSPICYLKAYHTNLYLSADADKVREAIDEGIAAATIFSPSRDVVVSQSQLRVAFDGDAVLFSDESERIVKAHGLDRFFEHEKAHENKPLAQGPLKGFLEALGRLQKKFYSKGLRLECPIRTYLVTARSAASSGARALKTLRSWGLETDEALFLAGAPKGPLLEKIRPHIFFDDQMFHVAGAQEMGTVAAHVPYGVAQNPRRAAAAKQSLGAQ.

The span at 1–11 (MEPGQPREARE) shows a compositional bias: basic and acidic residues. The disordered stretch occupies residues 1–23 (MEPGQPREAREPGPGAETAAVPR). The active-site Nucleophile is the D208.

Belongs to the 5'-nucleotidase type 3 family. The cofactor is Mg(2+).

The protein localises to the cytoplasm. The catalysed reaction is a ribonucleoside 5'-phosphate + H2O = a ribonucleoside + phosphate. It carries out the reaction a 2'-deoxyribonucleoside 5'-phosphate + H2O = a 2'-deoxyribonucleoside + phosphate. The enzyme catalyses IMP + H2O = inosine + phosphate. It catalyses the reaction AMP + H2O = adenosine + phosphate. The catalysed reaction is dCMP + H2O = 2'-deoxycytidine + phosphate. Its activity is regulated as follows. Activated by ADP. In terms of biological role, catalyzes the hydrolysis of ribonucleotide and deoxyribonucleotide monophosphates, releasing inorganic phosphate and the corresponding nucleoside. AMP is the major substrate but can also hydrolyze dCMP and IMP. In Mus musculus (Mouse), this protein is Cytosolic 5'-nucleotidase 1A (Nt5c1a).